The following is a 53-amino-acid chain: Dihydrolipoyl dehydrogenase (53 aa).

Residues 35 to 44 and lysine 53 contribute to the FAD site; that span reads EKYPTFGGTC. A disulfide bridge connects residues cysteine 44 and cysteine 49.

Belongs to the class-I pyridine nucleotide-disulfide oxidoreductase family. Homodimer. FAD serves as cofactor.

It is found in the mitochondrion. The enzyme catalyses N(6)-[(R)-dihydrolipoyl]-L-lysyl-[protein] + NAD(+) = N(6)-[(R)-lipoyl]-L-lysyl-[protein] + NADH + H(+). Lipoamide reduction and the NADH -&gt; NAD reaction are both completely inhibited by copper and cadmium ions. Lipoamide dehydrogenase is a component of the glycine cleavage system as well as of the alpha-ketoacid dehydrogenase complexes. This enzyme has lipoamide dehydrogenase activity and NADH -&gt; NAD transhydrogenation activity. Also displays some NADH-ferricyanide reductase and NADPH -&gt; NAD transydrogenation activities. This chain is Dihydrolipoyl dehydrogenase, found in Hymenolepis diminuta (Rat tapeworm).